Consider the following 123-residue polypeptide: Thioredoxin domain-containing protein 17 (123 aa).

Residue alanine 2 is modified to N-acetylalanine. Positions 41 to 123 constitute a Thioredoxin domain; that stretch reads SWCPDCVQAE…NLVEMLFSED (83 aa). Residues cysteine 43 and cysteine 46 each act as nucleophile in the active site. A disulfide bridge connects residues cysteine 43 and cysteine 46.

It belongs to the thioredoxin family. Interacts with TRXR1 and DYNLL1/DNCL1. Post-translationally, the oxidized protein is reduced by TRXR1. In terms of tissue distribution, ubiquitously expressed in cell lines.

The protein localises to the cytoplasm. Disulfide reductase. May participate in various redox reactions through the reversible oxidation of its active center dithiol to a disulfide and catalyze dithiol-disulfide exchange reactions. Modulates TNF-alpha signaling and NF-kappa-B activation. Has peroxidase activity and may contribute to the elimination of cellular hydrogen peroxide. The chain is Thioredoxin domain-containing protein 17 (TXNDC17) from Homo sapiens (Human).